We begin with the raw amino-acid sequence, 44 residues long: Large ribosomal subunit protein P2 (44 aa).

Methionine 1 bears the N-acetylmethionine mark. Phosphoserine occurs at positions 17 and 19. N6-acetyllysine; alternate is present on lysine 21. Lysine 21 bears the N6-succinyllysine; alternate mark.

This sequence belongs to the eukaryotic ribosomal protein P1/P2 family. In terms of assembly, heterodimer with RPLP1 at the lateral ribosomal stalk of the large ribosomal subunit. Phosphorylated.

Functionally, plays an important role in the elongation step of protein synthesis. This is Large ribosomal subunit protein P2 (RPLP2) from Oryctolagus cuniculus (Rabbit).